The chain runs to 97 residues: Large ribosomal subunit protein bL36m (97 aa).

The protein belongs to the bacterial ribosomal protein bL36 family. As to quaternary structure, component of the mitochondrial ribosome large subunit (39S) which comprises a 16S rRNA and about 50 distinct proteins.

It is found in the mitochondrion. This is Large ribosomal subunit protein bL36m (Mrpl36) from Rattus norvegicus (Rat).